A 377-amino-acid chain; its full sequence is UDP-N-acetylglucosamine--N-acetylmuramyl-(pentapeptide) pyrophosphoryl-undecaprenol N-acetylglucosamine transferase (377 aa).

Residues 29-31, Asn-142, Arg-179, Ser-213, and Gln-308 contribute to the UDP-N-acetyl-alpha-D-glucosamine site; that span reads TAG.

It belongs to the glycosyltransferase 28 family. MurG subfamily.

Its subcellular location is the cell membrane. The catalysed reaction is di-trans,octa-cis-undecaprenyl diphospho-N-acetyl-alpha-D-muramoyl-L-alanyl-D-glutamyl-meso-2,6-diaminopimeloyl-D-alanyl-D-alanine + UDP-N-acetyl-alpha-D-glucosamine = di-trans,octa-cis-undecaprenyl diphospho-[N-acetyl-alpha-D-glucosaminyl-(1-&gt;4)]-N-acetyl-alpha-D-muramoyl-L-alanyl-D-glutamyl-meso-2,6-diaminopimeloyl-D-alanyl-D-alanine + UDP + H(+). The protein operates within cell wall biogenesis; peptidoglycan biosynthesis. Cell wall formation. Catalyzes the transfer of a GlcNAc subunit on undecaprenyl-pyrophosphoryl-MurNAc-pentapeptide (lipid intermediate I) to form undecaprenyl-pyrophosphoryl-MurNAc-(pentapeptide)GlcNAc (lipid intermediate II). In Saccharopolyspora erythraea (strain ATCC 11635 / DSM 40517 / JCM 4748 / NBRC 13426 / NCIMB 8594 / NRRL 2338), this protein is UDP-N-acetylglucosamine--N-acetylmuramyl-(pentapeptide) pyrophosphoryl-undecaprenol N-acetylglucosamine transferase.